The chain runs to 1132 residues: Tyrosine-protein kinase JAK2 (1132 aa).

The segment at 1–239 (MGMACLTMTE…RYRFRRFIQQ (239 aa)) is interaction with cytokine/interferon/growth hormone receptors. An FERM domain is found at 37 to 380 (PVLLVYLYHS…GYYRLTADAH (344 aa)). Position 119 is a phosphotyrosine; by autocatalysis (Tyr-119). Phosphotyrosine occurs at positions 372 and 373. The region spanning 401-482 (HGPISMDFAI…SLKDLLNCYQ (82 aa)) is the SH2; atypical domain. Ser-523 is subject to Phosphoserine. Residues 545 to 809 (LIFNESLGQG…AIIRDLNSLF (265 aa)) form the Protein kinase 1 domain. A phosphotyrosine mark is found at Tyr-570 and Tyr-813. One can recognise a Protein kinase 2 domain in the interval 849–1126 (LKFLQQLGKG…RDLALRVDQI (278 aa)). 855–863 (LGKGNFGSV) is a binding site for ATP. Residue Tyr-868 is modified to Phosphotyrosine; by autocatalysis. Lys-882 is an ATP binding site. Phosphotyrosine; by autocatalysis occurs at positions 966 and 972. Asp-976 acts as the Proton acceptor in catalysis. A phosphotyrosine; by autocatalysis mark is found at Tyr-1007 and Tyr-1008.

The protein belongs to the protein kinase superfamily. Tyr protein kinase family. JAK subfamily. As to quaternary structure, interacts with IL23R, SKB1 and STAM2. Interacts with EPOR. Interacts with LYN. Interacts with SIRPA. Interacts with SH2B1. Interacts with TEC. Interacts with IFNGR2 (via intracellular domain). Interacts with LEPR (Isoform B). Interacts with HSP90AB1; promotes functional activation in a heat shock-dependent manner. Interacts with STRA6. Interacts with RHEX; this interaction occurs in a erythropoietin (EPO)-dependent manner. Interacts with ASB2; the interaction targets JAK2 for Notch-induced proteasomal degradation. The cofactor is Mg(2+). Post-translationally, autophosphorylated, leading to regulate its activity. Leptin promotes phosphorylation on tyrosine residues, including phosphorylation on Tyr-813. Autophosphorylation on Tyr-119 in response to EPO down-regulates its kinase activity. Autophosphorylation on Tyr-868, Tyr-966 and Tyr-972 in response to growth hormone (GH) are required for maximal kinase activity. Also phosphorylated by TEC. Phosphorylated on tyrosine residues in response to interferon gamma signaling. Phosphorylated on tyrosine residues in response to a signaling cascade that is activated by increased cellular retinol. Undergoes Notch-induced ubiquitination and subsequent proteasomal degradation which is mediated by ASB1 or ASB2, the substrate-recognition components of probable ECS E3 ubiquitin-protein ligase complexes.

It is found in the endomembrane system. The protein resides in the cytoplasm. Its subcellular location is the nucleus. The catalysed reaction is L-tyrosyl-[protein] + ATP = O-phospho-L-tyrosyl-[protein] + ADP + H(+). With respect to regulation, regulated by autophosphorylation, can both activate or decrease activity. Heme regulates its activity by enhancing the phosphorylation on Tyr-1007 and Tyr-1008. Non-receptor tyrosine kinase involved in various processes such as cell growth, development, differentiation or histone modifications. Mediates essential signaling events in both innate and adaptive immunity. In the cytoplasm, plays a pivotal role in signal transduction via its association with type I receptors such as growth hormone (GHR), prolactin (PRLR), leptin (LEPR), erythropoietin (EPOR), thrombopoietin (THPO); or type II receptors including IFN-alpha, IFN-beta, IFN-gamma and multiple interleukins. Following ligand-binding to cell surface receptors, phosphorylates specific tyrosine residues on the cytoplasmic tails of the receptor, creating docking sites for STATs proteins. Subsequently, phosphorylates the STATs proteins once they are recruited to the receptor. Phosphorylated STATs then form homodimer or heterodimers and translocate to the nucleus to activate gene transcription. For example, cell stimulation with erythropoietin (EPO) during erythropoiesis leads to JAK2 autophosphorylation, activation, and its association with erythropoietin receptor (EPOR) that becomes phosphorylated in its cytoplasmic domain. Then, STAT5 (STAT5A or STAT5B) is recruited, phosphorylated and activated by JAK2. Once activated, dimerized STAT5 translocates into the nucleus and promotes the transcription of several essential genes involved in the modulation of erythropoiesis. Part of a signaling cascade that is activated by increased cellular retinol and that leads to the activation of STAT5 (STAT5A or STAT5B). In addition, JAK2 mediates angiotensin-2-induced ARHGEF1 phosphorylation. Plays a role in cell cycle by phosphorylating CDKN1B. Cooperates with TEC through reciprocal phosphorylation to mediate cytokine-driven activation of FOS transcription. In the nucleus, plays a key role in chromatin by specifically mediating phosphorylation of 'Tyr-41' of histone H3 (H3Y41ph), a specific tag that promotes exclusion of CBX5 (HP1 alpha) from chromatin. Up-regulates the potassium voltage-gated channel activity of KCNA3. This is Tyrosine-protein kinase JAK2 from Pongo abelii (Sumatran orangutan).